We begin with the raw amino-acid sequence, 206 residues long: Large ribosomal subunit protein uL13y (206 aa).

This sequence belongs to the universal ribosomal protein uL13 family.

The polypeptide is Large ribosomal subunit protein uL13y (RPL13AB) (Arabidopsis thaliana (Mouse-ear cress)).